A 349-amino-acid chain; its full sequence is ATP phosphoribosyltransferase regulatory subunit (349 aa).

The disordered stretch occupies residues 327 to 349 (GRGRGVRPRRASARGGRARARPR). The span at 330 to 349 (RGVRPRRASARGGRARARPR) shows a compositional bias: basic residues.

It belongs to the class-II aminoacyl-tRNA synthetase family. HisZ subfamily. In terms of assembly, heteromultimer composed of HisG and HisZ subunits.

The protein resides in the cytoplasm. The protein operates within amino-acid biosynthesis; L-histidine biosynthesis; L-histidine from 5-phospho-alpha-D-ribose 1-diphosphate: step 1/9. Required for the first step of histidine biosynthesis. May allow the feedback regulation of ATP phosphoribosyltransferase activity by histidine. The sequence is that of ATP phosphoribosyltransferase regulatory subunit from Anaeromyxobacter sp. (strain K).